The primary structure comprises 294 residues: Sarcotoxin-2A (294 aa).

The N-terminal stretch at 1-22 is a signal peptide; it reads MKSFVFFAACMAIIALSSLVQA. The propeptide at 23 to 24 is removed by a dipeptidylpeptidase; the sequence is YP. Residue Q25 is modified to Pyrrolidone carboxylic acid. Position 293 is an arginine amide (R293).

The protein belongs to the attacin/sarcotoxin-2 family. As to expression, synthesized by the fat body and is eventually secreted into the hemolymph.

It localises to the secreted. Sarcotoxin II is an antibacterial protein which plays a role in the inflammatory response of this insect. The main effect of sarcotoxin II on E.coli may be the inhibition of cell wall synthesis, including septum formation. The sequence is that of Sarcotoxin-2A from Sarcophaga peregrina (Flesh fly).